The following is a 422-amino-acid chain: Exopolygalacturonase clone GBGE184 (422 aa).

A signal peptide spans 1-31 (MANARSLVAKANNINVGSLILMALVFGSCVA). PbH1 repeat units follow at residues 200 to 226 (TENVNIQNIKLTAPAESPNTDGIHLSN), 227 to 248 (ADNVSILDSTIATGDDCVSVGR), 250 to 270 (SNNVTVERVICGPGHGLSVGS), 280 to 301 (VSGIHVNNCTMIETDNGLRIKT), and 310 to 331 (AVDIKFENIIMQSVKNPIIIDQ). Residue Asn-229 is glycosylated (N-linked (GlcNAc...) asparagine). Asp-241 acts as the Proton donor in catalysis. Cysteines 243 and 260 form a disulfide. N-linked (GlcNAc...) asparagine glycosylation occurs at Asn-252. Residue His-264 is part of the active site. A glycan (N-linked (GlcNAc...) asparagine) is linked at Asn-287. 2 disulfide bridges follow: Cys-366/Cys-372 and Cys-404/Cys-420.

This sequence belongs to the glycosyl hydrolase 28 family.

Its subcellular location is the secreted. It is found in the cell wall. It catalyses the reaction [(1-&gt;4)-alpha-D-galacturonosyl](n) + H2O = alpha-D-galacturonate + [(1-&gt;4)-alpha-D-galacturonosyl](n-1). May function in depolymerizing pectin during pollen development, germination, and tube growth. Acts as an exo-polygalacturonase. The protein is Exopolygalacturonase clone GBGE184 (PGA3) of Arabidopsis thaliana (Mouse-ear cress).